The chain runs to 178 residues: Large ribosomal subunit protein uL6 (178 aa).

Belongs to the universal ribosomal protein uL6 family. As to quaternary structure, part of the 50S ribosomal subunit.

Functionally, this protein binds to the 23S rRNA, and is important in its secondary structure. It is located near the subunit interface in the base of the L7/L12 stalk, and near the tRNA binding site of the peptidyltransferase center. The sequence is that of Large ribosomal subunit protein uL6 from Helicobacter hepaticus (strain ATCC 51449 / 3B1).